The sequence spans 453 residues: GTPase Der (453 aa).

2 consecutive EngA-type G domains span residues 4–169 (PIVA…PPVT) and 177–352 (IKIA…EEHK). Residues 10 to 17 (GRPNVGKS), 57 to 61 (DTGGL), 120 to 123 (NKCE), 183 to 190 (GRPNVGKS), 230 to 234 (DTAGI), and 295 to 298 (NKWD) contribute to the GTP site. The KH-like domain maps to 353-438 (RRVSTSVINE…PIRLLWRSKK (86 aa)).

It belongs to the TRAFAC class TrmE-Era-EngA-EngB-Septin-like GTPase superfamily. EngA (Der) GTPase family. In terms of assembly, associates with the 50S ribosomal subunit.

In terms of biological role, GTPase that plays an essential role in the late steps of ribosome biogenesis. In Nostoc sp. (strain PCC 7120 / SAG 25.82 / UTEX 2576), this protein is GTPase Der.